The following is a 1106-amino-acid chain: Platelet-derived growth factor receptor beta (1106 aa).

The N-terminal stretch at 1 to 32 (MRLPGAMPALALKGELLLLSLLLLLEPQISQG) is a signal peptide. Ig-like C2-type domains lie at 33 to 120 (LVVT…YIFV), 129 to 210 (PNDA…YRLQ), 214 to 309 (INVS…INIT), 331 to 403 (HRSR…HEDA), and 416 to 524 (PVRV…VIVV). At 33–532 (LVVTPPGPEL…VVPHSLPFKV (500 aa)) the chain is on the extracellular side. 3 N-linked (GlcNAc...) asparagine glycosylation sites follow: Asn-45, Asn-89, and Asn-103. Cys-54 and Cys-100 are joined by a disulfide. A disulfide bond links Cys-149 and Cys-190. Asn-215 and Asn-230 each carry an N-linked (GlcNAc...) asparagine glycan. Cys-235 and Cys-291 form a disulfide bridge. Asn-292, Asn-307, Asn-354, Asn-371, Asn-468, and Asn-479 each carry an N-linked (GlcNAc...) asparagine glycan. An intrachain disulfide couples Cys-436 to Cys-508. Residues 533–553 (VVISAILALVVLTIISLIILI) traverse the membrane as a helical segment. Over 554-1106 (MLWQKKPRYE…PRAEAEDSFL (553 aa)) the chain is Cytoplasmic. 3 positions are modified to phosphotyrosine; by autocatalysis: Tyr-562, Tyr-579, and Tyr-581. Residues 600 to 962 (LVLGRTLGSG…QLVLLLERLL (363 aa)) enclose the Protein kinase domain. Residues 606–614 (LGSGAFGQV) and Lys-634 each bind ATP. Tyr-686 carries the phosphotyrosine; by ABL1 and ABL2 modification. 7 positions are modified to phosphotyrosine; by autocatalysis: Tyr-716, Tyr-740, Tyr-751, Tyr-763, Tyr-771, Tyr-775, and Tyr-778. The active-site Proton acceptor is the Asp-826. Residue Tyr-857 is modified to Phosphotyrosine; by autocatalysis. Phosphotyrosine; by ABL1 and ABL2 is present on residues Tyr-934 and Tyr-970. Tyr-1009 and Tyr-1021 each carry phosphotyrosine; by autocatalysis. Residues 1019 to 1106 (NDYIIPLPDP…PRAEAEDSFL (88 aa)) form a disordered region. Over residues 1043–1060 (SLASSTLNEVNTSSTISC) the composition is skewed to polar residues. Over residues 1066 to 1088 (PQDEPEPEPQLELQVEPEPELEQ) the composition is skewed to acidic residues.

This sequence belongs to the protein kinase superfamily. Tyr protein kinase family. CSF-1/PDGF receptor subfamily. In terms of assembly, interacts with homodimeric PDGFB and PDGFD, and with heterodimers formed by PDGFA and PDGFB. May also interact with homodimeric PDGFC. Monomer in the absence of bound ligand. Interaction with homodimeric PDGFB, heterodimers formed by PDGFA and PDGFB or homodimeric PDGFD, leads to receptor dimerization, where both PDGFRA homodimers and heterodimers with PDGFRB are observed. Interacts with SH2B2/APS. Interacts directly (tyrosine phosphorylated) with SHB. Interacts (tyrosine phosphorylated) with PIK3R1 and RASA1. Interacts (tyrosine phosphorylated) with CBL. Interacts (tyrosine phosphorylated) with SRC and SRC family kinases. Interacts (tyrosine phosphorylated) with PIK3C2B, maybe indirectly. Interacts (tyrosine phosphorylated) with SHC1, GRB7, GRB10 and NCK1. Interaction with GRB2 is mediated by SHC1. Interacts (via C-terminus) with NHERF1. Post-translationally, autophosphorylated on tyrosine residues upon ligand binding. Autophosphorylation occurs in trans, i.e. one subunit of the dimeric receptor phosphorylates tyrosine residues on the other subunit. Phosphorylation at Tyr-579, and to a lesser degree, at Tyr-581, is important for interaction with SRC family kinases. Phosphorylation at Tyr-740 and Tyr-751 is important for interaction with PIK3R1. Phosphorylation at Tyr-751 is important for interaction with NCK1. Phosphorylation at Tyr-771 and Tyr-857 is important for interaction with RASA1/GAP. Phosphorylation at Tyr-857 is important for efficient phosphorylation of PLCG1 and PTPN11, resulting in increased phosphorylation of AKT1, MAPK1/ERK2 and/or MAPK3/ERK1, PDCD6IP/ALIX and STAM, and in increased cell proliferation. Phosphorylation at Tyr-1009 is important for interaction with PTPN11. Phosphorylation at Tyr-1009 and Tyr-1021 is important for interaction with PLCG1. Phosphorylation at Tyr-1021 is important for interaction with CBL; PLCG1 and CBL compete for the same binding site. Dephosphorylated by PTPRJ at Tyr-751, Tyr-857, Tyr-1009 and Tyr-1021. Dephosphorylated by PTPN2 at Tyr-579 and Tyr-1021. In terms of processing, N-glycosylated. Ubiquitinated. After autophosphorylation, the receptor is polyubiquitinated, leading to its degradation.

The protein resides in the cell membrane. It localises to the cytoplasmic vesicle. Its subcellular location is the lysosome lumen. The catalysed reaction is L-tyrosyl-[protein] + ATP = O-phospho-L-tyrosyl-[protein] + ADP + H(+). With respect to regulation, present in an inactive conformation in the absence of bound ligand. Binding of PDGFB and/or PDGFD leads to dimerization and activation by autophosphorylation on tyrosine residues. Inhibited by imatinib. Its function is as follows. Tyrosine-protein kinase that acts as a cell-surface receptor for homodimeric PDGFB and PDGFD and for heterodimers formed by PDGFA and PDGFB, and plays an essential role in the regulation of embryonic development, cell proliferation, survival, differentiation, chemotaxis and migration. Plays an essential role in blood vessel development by promoting proliferation, migration and recruitment of pericytes and smooth muscle cells to endothelial cells. Plays a role in the migration of vascular smooth muscle cells and the formation of neointima at vascular injury sites. Required for normal development of the cardiovascular system. Required for normal recruitment of pericytes (mesangial cells) in the kidney glomerulus, and for normal formation of a branched network of capillaries in kidney glomeruli. Promotes rearrangement of the actin cytoskeleton and the formation of membrane ruffles. Binding of its cognate ligands - homodimeric PDGFB, heterodimers formed by PDGFA and PDGFB or homodimeric PDGFD -leads to the activation of several signaling cascades; the response depends on the nature of the bound ligand and is modulated by the formation of heterodimers between PDGFRA and PDGFRB. Phosphorylates PLCG1, PIK3R1, PTPN11, RASA1/GAP, CBL, SHC1 and NCK1. Activation of PLCG1 leads to the production of the cellular signaling molecules diacylglycerol and inositol 1,4,5-trisphosphate, mobilization of cytosolic Ca(2+) and the activation of protein kinase C. Phosphorylation of PIK3R1, the regulatory subunit of phosphatidylinositol 3-kinase, leads to the activation of the AKT1 signaling pathway. Phosphorylation of SHC1, or of the C-terminus of PTPN11, creates a binding site for GRB2, resulting in the activation of HRAS, RAF1 and down-stream MAP kinases, including MAPK1/ERK2 and/or MAPK3/ERK1. Promotes phosphorylation and activation of SRC family kinases. Promotes phosphorylation of PDCD6IP/ALIX and STAM. Receptor signaling is down-regulated by protein phosphatases that dephosphorylate the receptor and its down-stream effectors, and by rapid internalization of the activated receptor. The protein is Platelet-derived growth factor receptor beta (PDGFRB) of Homo sapiens (Human).